Reading from the N-terminus, the 177-residue chain is MTNIRIKLLTVQVITSLASGENIDFEKVEKLVKDAGFVIGDIKALIAAIHFIIFNSVKNDVDESTLSTELQQLGLPKEHCDSISRAFREHKEKLRSIFHNNTLKLPSLHSLDWRVDFILSSNTIQEVNSPSVQLNFKVKNHSNNEITNHPFEISAKKFNVLYYELKGAKLLMETVNQ.

The region spanning 107-176 (SLHSLDWRVD…GAKLLMETVN (70 aa)) is the COMM domain.

The protein belongs to the COMM domain-containing protein 4 family. In terms of assembly, component of the commander complex consisting of the CCC subcomplex and the retriever subcomplex. Component of the CCC subcomplex.

Scaffold protein in the commander complex that is essential for endosomal recycling of transmembrane cargos; the commander complex is composed of the CCC subcomplex and the retriever subcomplex. The chain is COMM domain-containing protein 4 (commd4) from Dictyostelium discoideum (Social amoeba).